Here is a 159-residue protein sequence, read N- to C-terminus: Phosphopantetheine adenylyltransferase (159 aa).

Substrate is bound at residue Ser8. Residues 8 to 9 (SF) and His16 contribute to the ATP site. The substrate site is built by Lys40, Thr72, and Arg86. Residues 87 to 89 (GLR), Glu97, and 122 to 128 (HSFVSSS) each bind ATP.

It belongs to the bacterial CoaD family. As to quaternary structure, homohexamer. The cofactor is Mg(2+).

It localises to the cytoplasm. The catalysed reaction is (R)-4'-phosphopantetheine + ATP + H(+) = 3'-dephospho-CoA + diphosphate. Its pathway is cofactor biosynthesis; coenzyme A biosynthesis; CoA from (R)-pantothenate: step 4/5. Its function is as follows. Reversibly transfers an adenylyl group from ATP to 4'-phosphopantetheine, yielding dephospho-CoA (dPCoA) and pyrophosphate. In Synechococcus sp. (strain JA-3-3Ab) (Cyanobacteria bacterium Yellowstone A-Prime), this protein is Phosphopantetheine adenylyltransferase.